A 669-amino-acid polypeptide reads, in one-letter code: Soluble guanylate cyclase 89Db (669 aa).

Histidine 104 is a heme binding site. Positions 430–458 (QHCSKLEIMFEKEEQRSDELEKSLELADS) form a coiled coil. A Guanylate cyclase domain is found at 494–620 (SVIFIEVMNI…DTVNTASRME (127 aa)).

Belongs to the adenylyl cyclase class-4/guanylyl cyclase family. Heterodimer; with Gyc88E, in the presence of magnesium or manganese. The cofactor is heme. In terms of tissue distribution, expressed in embryos in a segmental pattern in the ventral nerve cord (VNC) and in the brain, beginning at stage 13 and continuing through to stage 17. Colocalized with Gyc-89Db in several peripheral neurons that innervate trachea, basiconical sensilla and the sensory cones in the posterior segments of the embryo. Expression in wandering 3rd instar larvae is most prominent in a small cluster of cells located in the anterior medial region of each brain lobe. In the VNC, expression is found in scattered cells both laterally and at the midline.

Its subcellular location is the cytoplasm. The enzyme catalyses GTP = 3',5'-cyclic GMP + diphosphate. With respect to regulation, probably not activated by nitric oxide (NO). Heterodimer exhibits some stimulation, compounds (SIN-1 and two of the NONOates) that were ineffective at stimulating Gyc-88E homodimer did stimulate the heterodimer. Its function is as follows. Heterodimers with Gyc88E are activated in response to changing oxygen concentrations, alerting flies to hypoxic environments. Under normal oxygen concentrations, oxygen binds to the heme group and results in low levels of guanylyl cyclase activity. When exposed to reduced oxygen concentrations, the oxygen dissociates from the heme group resulting in activation of the enzyme. This chain is Soluble guanylate cyclase 89Db, found in Drosophila melanogaster (Fruit fly).